We begin with the raw amino-acid sequence, 97 residues long: Small cell adhesion glycoprotein (97 aa).

At 1 to 36 (MTSLLTTPSPREELMTTPILQPTEALSPEDGASTAL) the chain is on the extracellular side. Thr2 carries an O-linked (GalNAc...) threonine glycan. The O-linked (GalNAc...) serine glycan is linked to Ser3. O-linked (GalNAc...) threonine glycans are attached at residues Thr6 and Thr7. An O-linked (GalNAc...) serine glycan is attached at Ser9. O-linked (GalNAc...) threonine glycans are attached at residues Thr16, Thr17, and Thr23. A helical; Signal-anchor for type III membrane protein transmembrane segment spans residues 37–57 (IAVVITVVFLTLLSVVILIFF). The Cytoplasmic segment spans residues 58-97 (YLYKNKGSYVTYEPTEGEPSAIVQMESDLAKGSEKEEYFI).

The protein belongs to the SMAGP family. Post-translationally, O-glycosylated. The O-glycan is modified with sialic acid residues. Detected in breast, endometrium, colon and biliary tract. Detected in polarized epithelial structures characterized by cell-cell adhesion (at protein level).

The protein resides in the cell membrane. Its subcellular location is the cytoplasmic vesicle membrane. Its function is as follows. May play a role in epithelial cell-cell contacts. May play a role in tumor invasiveness and metastasis formation. The protein is Small cell adhesion glycoprotein (SMAGP) of Homo sapiens (Human).